A 360-amino-acid polypeptide reads, in one-letter code: Peptide chain release factor 1 (360 aa).

Residue Q235 is modified to N5-methylglutamine. The segment covering 280–293 has biased composition (basic and acidic residues); the sequence is DKQSHEQQAKEAAT. The interval 280-300 is disordered; it reads DKQSHEQQAKEAATRKSLIGS.

Belongs to the prokaryotic/mitochondrial release factor family. Post-translationally, methylated by PrmC. Methylation increases the termination efficiency of RF1.

The protein localises to the cytoplasm. In terms of biological role, peptide chain release factor 1 directs the termination of translation in response to the peptide chain termination codons UAG and UAA. In Paraburkholderia phytofirmans (strain DSM 17436 / LMG 22146 / PsJN) (Burkholderia phytofirmans), this protein is Peptide chain release factor 1.